The chain runs to 87 residues: Small ribosomal subunit protein uS15c (87 aa).

This sequence belongs to the universal ribosomal protein uS15 family. Part of the 30S ribosomal subunit.

Its subcellular location is the plastid. It localises to the chloroplast. In Nymphaea alba (White water-lily), this protein is Small ribosomal subunit protein uS15c (rps15).